We begin with the raw amino-acid sequence, 312 residues long: Ribosomal RNA small subunit methyltransferase H (312 aa).

Residues 35-37 (GGH), Asp-54, Phe-81, Asp-100, and Gln-107 each bind S-adenosyl-L-methionine.

Belongs to the methyltransferase superfamily. RsmH family.

The protein localises to the cytoplasm. The catalysed reaction is cytidine(1402) in 16S rRNA + S-adenosyl-L-methionine = N(4)-methylcytidine(1402) in 16S rRNA + S-adenosyl-L-homocysteine + H(+). Specifically methylates the N4 position of cytidine in position 1402 (C1402) of 16S rRNA. The sequence is that of Ribosomal RNA small subunit methyltransferase H from Campylobacter jejuni subsp. jejuni serotype O:2 (strain ATCC 700819 / NCTC 11168).